The chain runs to 316 residues: C1GALT1-specific chaperone 1 (316 aa).

Over 1–6 (MLSESS) the chain is Cytoplasmic. A helical; Signal-anchor for type II membrane protein transmembrane segment spans residues 7–26 (SFLKGVMLGSIFCALITMLG). Over 27 to 316 (HIRIGNRMHH…FLPPNGSEND (290 aa)) the chain is Lumenal.

This sequence belongs to the glycosyltransferase 31 family. Beta3-Gal-T subfamily. As to quaternary structure, associates with core 1 beta-3-galactosyltransferase (C1GALT1), probably not with the soluble active form.

The protein localises to the membrane. Functionally, probable chaperone required for the generation of 1 O-glycan Gal-beta1-3GalNAc-alpha1-Ser/Thr (T antigen), which is a precursor for many extended O-glycans in glycoproteins. Probably acts as a specific molecular chaperone assisting the folding/stability of core 1 beta-3-galactosyltransferase (C1GALT1). The chain is C1GALT1-specific chaperone 1 (C1galt1c1) from Rattus norvegicus (Rat).